Reading from the N-terminus, the 421-residue chain is UPF0229 protein lpl2726 (421 aa).

A disordered region spans residues 83 to 110; that stretch reads IAGDRIKRPGGGGSGGAGGNASDSGEGE. The span at 91-101 shows a compositional bias: gly residues; it reads PGGGGSGGAGG.

The protein belongs to the UPF0229 family.

The chain is UPF0229 protein lpl2726 from Legionella pneumophila (strain Lens).